Consider the following 279-residue polypeptide: HTH-type transcriptional activator RhaS (279 aa).

One can recognise an HTH araC/xylS-type domain in the interval 175–273 (QALLGWLQNN…SQAPKSLRHQ (99 aa)). 2 consecutive DNA-binding regions (H-T-H motif) follow at residues 192–213 (GSLA…KQHT) and 240–263 (ITTI…RKAF).

In terms of assembly, binds DNA as a dimer.

Its subcellular location is the cytoplasm. Its function is as follows. Activates expression of the rhaBAD and rhaT operons. This is HTH-type transcriptional activator RhaS from Pectobacterium carotovorum subsp. carotovorum (strain PC1).